The following is a 748-amino-acid chain: Catalase-peroxidase (748 aa).

A cross-link (tryptophyl-tyrosyl-methioninium (Trp-Tyr) (with M-262)) is located at residues 91–236 (WHSAGTYRVG…LAAVQMGLIY (146 aa)). The active-site Proton acceptor is His92. Positions 201 to 223 (AQPVADKAGHGKEHGRTDGGRNL) are disordered. Basic and acidic residues predominate over residues 207-221 (KAGHGKEHGRTDGGR). Positions 236 to 262 (YVNPEGPDGNPDPQASAHDIRETFARM) form a cross-link, tryptophyl-tyrosyl-methioninium (Tyr-Met) (with W-91). His277 serves as a coordination point for heme b.

Belongs to the peroxidase family. Peroxidase/catalase subfamily. Homodimer or homotetramer. Requires heme b as cofactor. In terms of processing, formation of the three residue Trp-Tyr-Met cross-link is important for the catalase, but not the peroxidase activity of the enzyme.

The catalysed reaction is H2O2 + AH2 = A + 2 H2O. It catalyses the reaction 2 H2O2 = O2 + 2 H2O. Functionally, bifunctional enzyme with both catalase and broad-spectrum peroxidase activity. This chain is Catalase-peroxidase, found in Bordetella avium (strain 197N).